The primary structure comprises 354 residues: Elongation factor Ts (354 aa).

Residues 81–84 (TDFV) form an involved in Mg(2+) ion dislocation from EF-Tu region.

Belongs to the EF-Ts family.

The protein resides in the cytoplasm. In terms of biological role, associates with the EF-Tu.GDP complex and induces the exchange of GDP to GTP. It remains bound to the aminoacyl-tRNA.EF-Tu.GTP complex up to the GTP hydrolysis stage on the ribosome. The polypeptide is Elongation factor Ts (Campylobacter curvus (strain 525.92)).